Reading from the N-terminus, the 263-residue chain is Ycf3-interacting protein 1, chloroplastic (263 aa).

The transit peptide at methionine 1–tyrosine 71 directs the protein to the chloroplast. The chain crosses the membrane as a helical span at residues alanine 238–phenylalanine 258.

This sequence belongs to the Y3IP1/CEST family. As to quaternary structure, interacts with Ycf3.

The protein resides in the plastid. It is found in the chloroplast thylakoid membrane. Nuclear genome-encoded factor that participates in photosystem I (PSI) biogenesis. Cooperates with the plastid genome-encoded protein PSI assembly Ycf3 in the assembly of stable PSI units in the thylakoid membrane. The sequence is that of Ycf3-interacting protein 1, chloroplastic from Nicotiana tabacum (Common tobacco).